A 743-amino-acid polypeptide reads, in one-letter code: Phosphoribosylformylglycinamidine synthase subunit PurL (743 aa).

The active site involves histidine 53. 2 residues coordinate ATP: tyrosine 56 and lysine 95. A Mg(2+)-binding site is contributed by glutamate 97. Substrate is bound by residues 98–101 (SHNH) and arginine 120. The active-site Proton acceptor is the histidine 99. Mg(2+) is bound at residue aspartate 121. A substrate-binding site is contributed by glutamine 245. Aspartate 275 serves as a coordination point for Mg(2+). 319-321 (ESQ) contributes to the substrate binding site. Positions 502 and 539 each coordinate ATP. Asparagine 540 serves as a coordination point for Mg(2+). Serine 542 provides a ligand contact to substrate.

The protein belongs to the FGAMS family. As to quaternary structure, monomer. Part of the FGAM synthase complex composed of 1 PurL, 1 PurQ and 2 PurS subunits.

The protein resides in the cytoplasm. It catalyses the reaction N(2)-formyl-N(1)-(5-phospho-beta-D-ribosyl)glycinamide + L-glutamine + ATP + H2O = 2-formamido-N(1)-(5-O-phospho-beta-D-ribosyl)acetamidine + L-glutamate + ADP + phosphate + H(+). The protein operates within purine metabolism; IMP biosynthesis via de novo pathway; 5-amino-1-(5-phospho-D-ribosyl)imidazole from N(2)-formyl-N(1)-(5-phospho-D-ribosyl)glycinamide: step 1/2. In terms of biological role, part of the phosphoribosylformylglycinamidine synthase complex involved in the purines biosynthetic pathway. Catalyzes the ATP-dependent conversion of formylglycinamide ribonucleotide (FGAR) and glutamine to yield formylglycinamidine ribonucleotide (FGAM) and glutamate. The FGAM synthase complex is composed of three subunits. PurQ produces an ammonia molecule by converting glutamine to glutamate. PurL transfers the ammonia molecule to FGAR to form FGAM in an ATP-dependent manner. PurS interacts with PurQ and PurL and is thought to assist in the transfer of the ammonia molecule from PurQ to PurL. This is Phosphoribosylformylglycinamidine synthase subunit PurL from Lactobacillus helveticus (strain DPC 4571).